Here is a 447-residue protein sequence, read N- to C-terminus: Phosphoglucosamine mutase (447 aa).

Ser-106 acts as the Phosphoserine intermediate in catalysis. Mg(2+) contacts are provided by Ser-106, Asp-245, Asp-247, and Asp-249. Residue Ser-106 is modified to Phosphoserine.

The protein belongs to the phosphohexose mutase family. Requires Mg(2+) as cofactor. Post-translationally, activated by phosphorylation.

It catalyses the reaction alpha-D-glucosamine 1-phosphate = D-glucosamine 6-phosphate. Catalyzes the conversion of glucosamine-6-phosphate to glucosamine-1-phosphate. The polypeptide is Phosphoglucosamine mutase (Cupriavidus pinatubonensis (strain JMP 134 / LMG 1197) (Cupriavidus necator (strain JMP 134))).